Reading from the N-terminus, the 314-residue chain is Probable manganese-dependent inorganic pyrophosphatase (314 aa).

His10, Asp14, Asp16, Asp80, His102, and Asp154 together coordinate Mn(2+).

Belongs to the PPase class C family. It depends on Mn(2+) as a cofactor.

The protein localises to the cytoplasm. It carries out the reaction diphosphate + H2O = 2 phosphate + H(+). The sequence is that of Probable manganese-dependent inorganic pyrophosphatase (ppaC) from Lactococcus lactis subsp. lactis (strain IL1403) (Streptococcus lactis).